The sequence spans 422 residues: UDP-N-acetylglucosamine 1-carboxyvinyltransferase (422 aa).

Residue 22-23 (KN) participates in phosphoenolpyruvate binding. Arginine 93 is a binding site for UDP-N-acetyl-alpha-D-glucosamine. The Proton donor role is filled by cysteine 117. Cysteine 117 carries the post-translational modification 2-(S-cysteinyl)pyruvic acid O-phosphothioketal. UDP-N-acetyl-alpha-D-glucosamine is bound by residues 122–126 (RPVDL), aspartate 308, and isoleucine 330.

Belongs to the EPSP synthase family. MurA subfamily.

It localises to the cytoplasm. It catalyses the reaction phosphoenolpyruvate + UDP-N-acetyl-alpha-D-glucosamine = UDP-N-acetyl-3-O-(1-carboxyvinyl)-alpha-D-glucosamine + phosphate. It participates in cell wall biogenesis; peptidoglycan biosynthesis. In terms of biological role, cell wall formation. Adds enolpyruvyl to UDP-N-acetylglucosamine. The polypeptide is UDP-N-acetylglucosamine 1-carboxyvinyltransferase (Legionella pneumophila (strain Paris)).